The sequence spans 150 residues: MKVQVKLLDPRLGKEWPLPSYATAGSAGLDLRACLDEAIEIEPGQTVLVKTGMAIYIHDVNFAGLILPRSGLGHKHGIVLGNLVGLIDSDYQGELMVSVWNRGQTTFRLEPGERLAQYVLVPVVQAEFEQVEEFEETLRGAGGFGHTGKQ.

Residues 69–71, Asn-82, 86–88, and Met-96 each bind substrate; these read RSG and LID.

This sequence belongs to the dUTPase family. Mg(2+) serves as cofactor.

It catalyses the reaction dUTP + H2O = dUMP + diphosphate + H(+). It functions in the pathway pyrimidine metabolism; dUMP biosynthesis; dUMP from dCTP (dUTP route): step 2/2. In terms of biological role, this enzyme is involved in nucleotide metabolism: it produces dUMP, the immediate precursor of thymidine nucleotides and it decreases the intracellular concentration of dUTP so that uracil cannot be incorporated into DNA. In Acinetobacter baumannii (strain AB307-0294), this protein is Deoxyuridine 5'-triphosphate nucleotidohydrolase.